The following is a 166-amino-acid chain: Anterior gradient protein 3 (166 aa).

Positions 1-21 are cleaved as a signal peptide; that stretch reads MMLHSALGLCLLLVTVSSNLA. The Prevents secretion from ER motif lies at 163–166; the sequence is QSEL.

It belongs to the AGR family. Interacts with LYPD3 and DAG1 (alphaDAG1). Expressed in the lung, in the ciliated cells of the airway epithelium. Expression increased with differentiation of airway epithelial cells. Not detected in the mucous cells. Expressed in ciliated cells in the oviduct. Also detected in stomach, colon, prostate and liver. Expressed in breast, ovary, prostate and liver cancer. Expression is associated with the level of differentiation of breast cancer (at protein level).

It localises to the endoplasmic reticulum. Required for calcium-mediated regulation of ciliary beat frequency and mucociliary clearance in the airway. Might be involved in the regulation of intracellular calcium in tracheal epithelial cells. The sequence is that of Anterior gradient protein 3 (AGR3) from Homo sapiens (Human).